The primary structure comprises 143 residues: Nucleoside diphosphate kinase (143 aa).

Positions 11, 59, 87, 93, 104, and 114 each coordinate ATP. His-117 serves as the catalytic Pros-phosphohistidine intermediate.

This sequence belongs to the NDK family. Homotetramer. Mg(2+) serves as cofactor.

Its subcellular location is the cytoplasm. It catalyses the reaction a 2'-deoxyribonucleoside 5'-diphosphate + ATP = a 2'-deoxyribonucleoside 5'-triphosphate + ADP. It carries out the reaction a ribonucleoside 5'-diphosphate + ATP = a ribonucleoside 5'-triphosphate + ADP. Functionally, major role in the synthesis of nucleoside triphosphates other than ATP. The ATP gamma phosphate is transferred to the NDP beta phosphate via a ping-pong mechanism, using a phosphorylated active-site intermediate. In Shewanella pealeana (strain ATCC 700345 / ANG-SQ1), this protein is Nucleoside diphosphate kinase.